Reading from the N-terminus, the 312-residue chain is Olfactory receptor 51A7 (312 aa).

At 1-25 (MSVLNNSEVKLFLLIGIPGLEHAHI) the chain is on the extracellular side. A glycan (N-linked (GlcNAc...) asparagine) is linked at N5. The helical transmembrane segment at 26–46 (WFSIPICLMYLLAIMGNCTIL) threads the bilayer. Over 47–54 (FIIKTEPS) the chain is Cytoplasmic. A helical membrane pass occupies residues 55–75 (LHEPMYYFLAMLAVSDMGLSL). The Extracellular segment spans residues 76 to 99 (SSLPTMLRVFLFNAMGISPNACFA). C97 and C189 are joined by a disulfide. Residues 100-120 (QEFFIHGFTVMESSVLLIMSL) form a helical membrane-spanning segment. Residues 121–139 (DRFLAIHNPLRYSSILTSN) lie on the Cytoplasmic side of the membrane. The helical transmembrane segment at 140 to 160 (RVAKMGLILAIRSILLVIPFP) threads the bilayer. Topologically, residues 161 to 196 (FTLRRLKYCQKNLLSHSYCLHQDTMKLACSDNKTNV) are extracellular. A glycan (N-linked (GlcNAc...) asparagine) is linked at N192. A helical membrane pass occupies residues 197–216 (IYGFFIALCTMLDLALIVLS). The Cytoplasmic portion of the chain corresponds to 217-236 (YVLILKTILSIASLAERLKA). A helical membrane pass occupies residues 237 to 257 (LNTCVSHICAVLTFYVPIITL). The Extracellular segment spans residues 258 to 272 (AAMHHFAKHKSPLVV). The helical transmembrane segment at 273–293 (ILIADMFLLVPPLMNPIVYCV) threads the bilayer. At 294-312 (KTRQIWEKILGKLLNVCGR) the chain is on the cytoplasmic side.

This sequence belongs to the G-protein coupled receptor 1 family.

The protein resides in the cell membrane. Functionally, odorant receptor. This Homo sapiens (Human) protein is Olfactory receptor 51A7 (OR51A7).